Reading from the N-terminus, the 325-residue chain is Hydroxymethylglutaryl-CoA lyase, mitochondrial (325 aa).

The N-terminal 27 residues, 1 to 27 (MAAMTKALPRRLVGLASLRAVSTSSMD), are a transit peptide targeting the mitochondrion. One can recognise a Pyruvate carboxyltransferase domain in the interval 33-300 (VKIVEVGPRD…HTGVNLQKLL (268 aa)). Residue Arg41 coordinates substrate. Asp42 contacts a divalent metal cation. N6-acetyllysine; alternate is present on Lys48. Lys48 is subject to N6-succinyllysine; alternate. N6-acetyllysine is present on Lys111. 2 positions are modified to N6-acetyllysine; alternate: Lys137 and Lys179. Residues Lys137 and Lys179 each carry the N6-succinyllysine; alternate modification. His233 and His235 together coordinate a divalent metal cation. The active site involves Cys266. Asn275 serves as a coordination point for a divalent metal cation. The short motif at 323–325 (CKL) is the Microbody targeting signal element. N6-acetyllysine is present on Lys324.

Belongs to the HMG-CoA lyase family. In terms of assembly, homodimer; disulfide-linked. Can also form homotetramers.

It is found in the mitochondrion matrix. Its subcellular location is the peroxisome. It carries out the reaction (3S)-3-hydroxy-3-methylglutaryl-CoA = acetoacetate + acetyl-CoA. It functions in the pathway metabolic intermediate metabolism; (S)-3-hydroxy-3-methylglutaryl-CoA degradation; acetoacetate from (S)-3-hydroxy-3-methylglutaryl-CoA: step 1/1. Its function is as follows. Mitochondrial 3-hydroxy-3-methylglutaryl-CoA lyase that catalyzes a cation-dependent cleavage of (S)-3-hydroxy-3-methylglutaryl-CoA into acetyl-CoA and acetoacetate, a key step in ketogenesis. Terminal step in leucine catabolism. Ketone bodies (beta-hydroxybutyrate, acetoacetate and acetone) are essential as an alternative source of energy to glucose, as lipid precursors and as regulators of metabolism. The protein is Hydroxymethylglutaryl-CoA lyase, mitochondrial (HMGCL) of Macaca fascicularis (Crab-eating macaque).